A 394-amino-acid chain; its full sequence is 3-hydroxybenzoate 6-hydroxylase 1 (394 aa).

It belongs to the 3-hydroxybenzoate 6-hydroxylase family. In terms of assembly, homotrimer. It depends on FAD as a cofactor.

It carries out the reaction 3-hydroxybenzoate + NADH + O2 + H(+) = 2,5-dihydroxybenzoate + NAD(+) + H2O. With respect to regulation, inhibited by manganese, copper, mercury, and iron ions. Its function is as follows. Catalyzes the NAD- or NADP-dependent conversion of 3-hydroxybenzoate to gentisate. The affinity of the enzyme toward NAD is twice as high as for NADP. The enzyme shows higher specific activities against the intermediates in the degradation of 2,5-xylenol and 3,5-xylenol, 3-hydroxy-4-methylbenzoate and 3-hydroxy-5-methylbenzoate, respectively, than for 3-hydroxybenzoate. It also shows activity against 3-substituted benzoates. In Aquipseudomonas alcaligenes (Pseudomonas alcaligenes), this protein is 3-hydroxybenzoate 6-hydroxylase 1 (xlnD).